The chain runs to 323 residues: MPSVFFSYSHADEGLRDQLEKQLSMLKRQGVIETWHDRRIGAGEDIHRAIDDHINTDDIILLLVSADFIASDYCYDIEMQRAMERHHSGEAIVIPIILRACDWHHAPFGKLNAVPRDGKPITQWPDIDEAFLQVAKAVREAAGRVTRTASAPPARAAAAATPAASPAPQSLGPRSSNLRLAKSFTQRDKDQFRHDTFEYIARFFENSLKELGERNAGFEGVFRRVDANRFFATIYRDGKDVSRGTAYLGGETWGRGINYVHGETTSSNSSNESLNVEADDQTLFLTSMGMASFGRDRDQKLSQEGAAELLWAILIAPLQGTRY.

Positions 1 to 142 constitute a TIR domain; it reads MPSVFFSYSH…QVAKAVREAA (142 aa).

This is an uncharacterized protein from Sinorhizobium fredii (strain NBRC 101917 / NGR234).